A 58-amino-acid polypeptide reads, in one-letter code: UPF0509 protein YciZ (58 aa).

Belongs to the UPF0509 family.

This chain is UPF0509 protein YciZ, found in Escherichia fergusonii (strain ATCC 35469 / DSM 13698 / CCUG 18766 / IAM 14443 / JCM 21226 / LMG 7866 / NBRC 102419 / NCTC 12128 / CDC 0568-73).